Here is a 257-residue protein sequence, read N- to C-terminus: Outer membrane protein YaiO (257 aa).

Positions 1-19 are cleaved as a signal peptide; the sequence is MIKRTLLAAAIFSALPAYA.

It is found in the cell outer membrane. The protein is Outer membrane protein YaiO (yaiO) of Escherichia coli (strain K12).